The primary structure comprises 284 residues: Cytosolic Fe-S cluster assembly factor NUBP2 homolog (284 aa).

27–34 (GKGGVGKS) is a binding site for ATP. [4Fe-4S] cluster is bound by residues cysteine 200 and cysteine 203.

This sequence belongs to the Mrp/NBP35 ATP-binding proteins family. NUBP2/CFD1 subfamily. In terms of assembly, heterotetramer of 2 NUBP1 and 2 NUBP2 chains. [4Fe-4S] cluster serves as cofactor.

Its subcellular location is the cytoplasm. Functionally, component of the cytosolic iron-sulfur (Fe/S) protein assembly (CIA) machinery. Required for maturation of extramitochondrial Fe-S proteins. The NUBP1-NUBP2 heterotetramer forms a Fe-S scaffold complex, mediating the de novo assembly of an Fe-S cluster and its transfer to target apoproteins. This is Cytosolic Fe-S cluster assembly factor NUBP2 homolog from Monosiga brevicollis (Choanoflagellate).